The primary structure comprises 90 residues: Conotoxin Vc22.1 (90 aa).

A signal peptide spans M1–G18.

The protein belongs to the E superfamily. Contains 4 disulfide bonds. In terms of tissue distribution, expressed by the venom duct.

It is found in the secreted. This Conus victoriae (Queen Victoria cone) protein is Conotoxin Vc22.1.